Here is a 484-residue protein sequence, read N- to C-terminus: Myosin-binding protein H (484 aa).

Residues 1–78 (MTGKATPEAS…KPEAPSEDVP (78 aa)) are disordered. Residues Thr2, Thr6, and Thr26 each carry the phosphothreonine modification. Residues 41–71 (QEQAPEPQKQPQAQDPAAHEAPATPATTKPE) are compositionally biased toward low complexity. Residues 80–175 (APLQLTLEDV…LDQPVHIQEI (96 aa)) enclose the Fibronectin type-III 1 domain. The region spanning 179-267 (PKIRVPRHLR…EGLEAKAAID (89 aa)) is the Ig-like C2-type 1 domain. A Fibronectin type-III 2 domain is found at 276 to 371 (PPSSIKLLDV…TKELAHIHKA (96 aa)). One can recognise an Ig-like C2-type 2 domain in the interval 389–479 (PSFTQPVADR…PAVDCRLEVK (91 aa)).

The protein belongs to the immunoglobulin superfamily. MyBP family. As to expression, skeletal muscle.

In terms of biological role, binds to myosin; probably involved in interaction with thick myofilaments in the A-band. The polypeptide is Myosin-binding protein H (Mybph) (Rattus norvegicus (Rat)).